The following is an 893-amino-acid chain: cGMP-specific 3',5'-cyclic phosphodiesterase (893 aa).

GAF domains follow at residues 21 to 173 (DIDV…GIGI) and 205 to 390 (NLEC…GLGI). The PDEase domain maps to 420–743 (GQDQTEKLIQ…RNWQDLAEKV (324 aa)). The active-site Proton donor is the His496. Residues His500, His536, Asp537, and Asp647 each coordinate a divalent metal cation. Disordered regions lie at residues 784 to 807 (QQSQHGGDDSHTPEHQRSGSRLSI) and 844 to 893 (HVSE…CALL). Basic and acidic residues-rich tracts occupy residues 789 to 800 (GGDDSHTPEHQR) and 844 to 853 (HVSEDMDDKS). Residues 864 to 880 (SVGRMSASSSTSSAGTV) are compositionally biased toward low complexity. Residues 883–893 (SKKRSKLCALL) are compositionally biased toward basic residues. Cys890 is subject to Cysteine methyl ester. Cys890 is lipidated: S-farnesyl cysteine. A propeptide spans 891-893 (ALL) (removed in mature form).

It belongs to the cyclic nucleotide phosphodiesterase family. As to quaternary structure, interacts with PrBP. Requires a divalent metal cation as cofactor.

It localises to the cell membrane. The enzyme catalyses 3',5'-cyclic GMP + H2O = GMP + H(+). Has a role regulating cGMP transport in Malpighian tubule principal cells. The chain is cGMP-specific 3',5'-cyclic phosphodiesterase from Drosophila virilis (Fruit fly).